We begin with the raw amino-acid sequence, 541 residues long: 1'-carboxy-chondrochloren decarboxylase (541 aa).

In terms of domain architecture, FAD-binding PCMH-type spans 39–226 (TTHRIPAIIS…TRMTIWLAPR (188 aa)).

The enzyme catalyses 1'-carboxy-chondrochloren A + FAD + 2 H(+) = chondrochloren A + FADH2 + CO2. It carries out the reaction 1'-carboxy-chondrochloren B + FAD + 2 H(+) = chondrochloren B + FADH2 + CO2. Its pathway is antibiotic biosynthesis. Activity is not affected by the addition of EDTA or/and EGTA chelators or in the presence of external metals like Zn(2+), Mg(2+), Mn(2+) and Fe(2+). Activity is inhibited under low oxygen conditions. Functionally, oxidative decarboxylase involved in the biosynthesis of the antibiotics chondrochloren A and chondrochloren B. Catalyzes the decarboxylation of biologically inactive pre-chondrochloren A and pre-chondrochloren B to yield mature chondrochloren A and chondrochloren B, respectively. Cannot decarboxylate free L-tyrosine, 3-chloro-tyrosine or a number of chlorinated and non-chlorinated analog substrates containing variable N-acyl chains. The sequence is that of 1'-carboxy-chondrochloren decarboxylase from Chondromyces crocatus.